Reading from the N-terminus, the 256-residue chain is Enoyl-[acyl-carrier-protein] reductase [NADPH] FabI (256 aa).

NADP(+) contacts are provided by residues Gly-13, 19-20 (SI), 40-44 (RKERS), 66-67 (DV), and Ile-94. A substrate-binding site is contributed by Ala-97. Residues Tyr-147 and Tyr-157 each act as proton acceptor in the active site. NADP(+)-binding positions include Lys-164 and 193-197 (IRTLS).

Belongs to the short-chain dehydrogenases/reductases (SDR) family. FabI subfamily. In terms of assembly, homotetramer.

The enzyme catalyses a 2,3-saturated acyl-[ACP] + NADP(+) = a (2E)-enoyl-[ACP] + NADPH + H(+). It functions in the pathway lipid metabolism; fatty acid biosynthesis. In terms of biological role, catalyzes the reduction of a carbon-carbon double bond in an enoyl moiety that is covalently linked to an acyl carrier protein (ACP). Involved in the elongation cycle of fatty acid which are used in the lipid metabolism. The protein is Enoyl-[acyl-carrier-protein] reductase [NADPH] FabI (fabI) of Staphylococcus aureus (strain MRSA252).